A 930-amino-acid polypeptide reads, in one-letter code: Translation initiation factor IF-2 (930 aa).

Residues 50 to 67 (FKPAAAPKVEAKPAAPKV) show a composition bias toward low complexity. Disordered regions lie at residues 50-217 (FKPA…SSEE) and 260-346 (EVVP…HELP). Basic and acidic residues-rich tracts occupy residues 68–90 (SAEK…EAKP) and 110–125 (FKAE…AERR). Positions 129 to 141 (KGNNRDQQQNGNR) are enriched in low complexity. 2 stretches are compositionally biased toward basic and acidic residues: residues 157 to 167 (RDNRRFNDQAK) and 262 to 295 (VPEK…DGPR). Positions 309–318 (NQKNSNWNNN) are enriched in low complexity. The span at 337 to 346 (VTERKFHELP) shows a compositional bias: basic and acidic residues. Residues 432-599 (ERPPVVTIMG…TVLLVAEIQE (168 aa)) enclose the tr-type G domain. The G1 stretch occupies residues 441 to 448 (GHVDHGKT). 441–448 (GHVDHGKT) lines the GTP pocket. The segment at 466-470 (GITQH) is G2. The segment at 487-490 (DTPG) is G3. Residues 487-491 (DTPGH) and 541-544 (NKID) contribute to the GTP site. The tract at residues 541-544 (NKID) is G4. The interval 577–579 (SAK) is G5.

The protein belongs to the TRAFAC class translation factor GTPase superfamily. Classic translation factor GTPase family. IF-2 subfamily.

The protein localises to the cytoplasm. In terms of biological role, one of the essential components for the initiation of protein synthesis. Protects formylmethionyl-tRNA from spontaneous hydrolysis and promotes its binding to the 30S ribosomal subunits. Also involved in the hydrolysis of GTP during the formation of the 70S ribosomal complex. The polypeptide is Translation initiation factor IF-2 (Streptococcus pneumoniae (strain ATCC 700669 / Spain 23F-1)).